Reading from the N-terminus, the 160-residue chain is Large ribosomal subunit protein uL15 (160 aa).

Residues 1–13 show a composition bias toward basic and acidic residues; it reads MKLNEIRDNEGAR. The segment at 1 to 41 is disordered; the sequence is MKLNEIRDNEGARKSRIRVGRGIGSGKGKTGGRGVKGQKSR. Residues 21 to 35 show a composition bias toward gly residues; the sequence is RGIGSGKGKTGGRGV.

Belongs to the universal ribosomal protein uL15 family. As to quaternary structure, part of the 50S ribosomal subunit.

Binds to the 23S rRNA. In Parvibaculum lavamentivorans (strain DS-1 / DSM 13023 / NCIMB 13966), this protein is Large ribosomal subunit protein uL15.